Here is a 164-residue protein sequence, read N- to C-terminus: Arginine repressor (164 aa).

This sequence belongs to the ArgR family.

It is found in the cytoplasm. Its pathway is amino-acid biosynthesis; L-arginine biosynthesis [regulation]. Functionally, regulates arginine biosynthesis genes. The polypeptide is Arginine repressor (Thermus thermophilus (strain ATCC BAA-163 / DSM 7039 / HB27)).